A 479-amino-acid polypeptide reads, in one-letter code: Deoxyribodipyrimidine photo-lyase (479 aa).

The region spanning 6 to 132 is the Photolyase/cryptochrome alpha/beta domain; it reads APVIVWFRKD…TVRSFSGQLL (127 aa). Tyr-226 provides a ligand contact to FAD. Arg-230 contacts DNA. FAD is bound by residues 238–242 and 277–284; these read TSLLS and EIVWREFC. Interaction with DNA stretches follow at residues 277-284 and 343-344; these read EIVWREFC and NR. An FAD-binding site is contributed by 374–376; sequence DAD. Gln-406 is a DNA binding site.

The protein belongs to the DNA photolyase class-3 family. FAD serves as cofactor. It depends on (6R)-5,10-methylene-5,6,7,8-tetrahydrofolate as a cofactor.

The catalysed reaction is cyclobutadipyrimidine (in DNA) = 2 pyrimidine residues (in DNA).. Its function is as follows. Photolyase involved in the repair of UV radiation-induced DNA damage. By using blue-light energy, catalyzes the photoreactivation of cyclobutane pyrimidine dimers (CPDs), which are formed between adjacent bases on the same DNA strand upon exposure to ultraviolet radiation. Can repair CPD lesions in ssDNA as well as in dsDNA. The sequence is that of Deoxyribodipyrimidine photo-lyase from Agrobacterium fabrum (strain C58 / ATCC 33970) (Agrobacterium tumefaciens (strain C58)).